A 775-amino-acid chain; its full sequence is Mitochondrial 15S rRNA processing factor CCM1 (775 aa).

The N-terminal 18 residues, methionine 1–arginine 18, are a transit peptide targeting the mitochondrion. Positions histidine 35–leucine 65 are disordered. Over residues serine 41–aspartate 55 the composition is skewed to polar residues. Basic and acidic residues predominate over residues serine 56–leucine 65. PPR repeat units follow at residues proline 289–isoleucine 323, serine 324–glutamine 355, glycine 362–proline 396, asparagine 397–proline 432, and threonine 433–serine 467.

It belongs to the CCM1 family. Binds to mitochondrial small subunit 15S rRNA.

It is found in the mitochondrion. Functionally, regulates mitochondrial small subunit maturation by controlling 15S rRNA 5'-end processing. Localizes to the 5' precursor of the 15S rRNA in a position that is subsequently occupied by mS47 in the mature yeast mtSSU. Uses structure and sequence-specific RNA recognition, binding to a single-stranded region of the precursor and specifically recognizing bases -6 to -1. The exchange of Ccm1 for mS47 is coupled to the irreversible removal of precursor rRNA that is accompanied by conformational changes of the mitoribosomal proteins uS5m and mS26. These conformational changes signal completion of 5'-end rRNA processing through protection of the mature 5'-end of the 15S rRNA and stabilization of mS47. The removal of the 5' precursor together with the dissociation of Ccm1 may be catalyzed by the 5'-3' exoribonuclease Pet127. Involved in the specific removal of group I introns in mitochondrial encoded transcripts. The chain is Mitochondrial 15S rRNA processing factor CCM1 (CCM1) from Scheffersomyces stipitis (strain ATCC 58785 / CBS 6054 / NBRC 10063 / NRRL Y-11545) (Yeast).